Here is a 176-residue protein sequence, read N- to C-terminus: uncharacterized protein (176 aa).

Positions 1–12 (MRLPYSSSKPIP) are enriched in polar residues. Disordered stretches follow at residues 1–88 (MRLP…PQQQ) and 109–132 (VNNS…PSSS). A compositionally biased stretch (low complexity) spans 13-24 (TNNNNNNNNTNN). The span at 37–46 (SYYQTQENNK) shows a compositional bias: polar residues. The segment covering 47-88 (PQQSQQHPLLQHQQQQQQQQQQQQQQQQQQQQQQQQQQPQQQ) has biased composition (low complexity).

This is an uncharacterized protein from Dictyostelium discoideum (Social amoeba).